The chain runs to 503 residues: Maturase K (503 aa).

Belongs to the intron maturase 2 family. MatK subfamily.

It localises to the plastid. The protein localises to the chloroplast. Its function is as follows. Usually encoded in the trnK tRNA gene intron. Probably assists in splicing its own and other chloroplast group II introns. This Aethionema cordifolium (Lebanon stonecress) protein is Maturase K.